The following is a 452-amino-acid chain: Transcription factor PERIANTHIA (452 aa).

The bZIP domain maps to 164 to 227; sequence DQRTLRRLAQ…RGVSADHTHL (64 aa). A basic motif region spans residues 166–186; it reads RTLRRLAQNREAARKSRLRKK. The leucine-zipper stretch occupies residues 192–206; that stretch reads LENSRIRLAQLEEEL. Positions 233–449 constitute a DOG1 domain; that stretch reads VFSFELEYTR…RALSSLWLAR (217 aa).

It belongs to the bZIP family. Interacts with GRXC7/ROXY1. Interacts with BOP1 and BOP2.

Its subcellular location is the nucleus. In terms of biological role, transcriptional activator involved in the determination of floral organ number. Acts to determine floral organ patterning by establishing floral organ primordia in specific numbers and positions. Plays a role in regulating stem cell fate by directly controlling AG expression. Binds to the 5'-AAGAAT-3' cis-acting element found in AG promoter. Might represent a target for a post-translational modification by GRXC7/ROXY1. This Arabidopsis thaliana (Mouse-ear cress) protein is Transcription factor PERIANTHIA (PAN).